The sequence spans 1137 residues: Nonsense-mediated mRNA decay factor SMG7 (1137 aa).

The residue at position 2 (serine 2) is an N-acetylserine. TPR repeat units lie at residues 152 to 185 (QHCLVHLGDIARYRNQTSQAESYYRHAAQLVPSN) and 187 to 219 (QPYNQLAILASSKGDHLTTIFYYCRSIAVKFPF). The residue at position 520 (serine 520) is a Phosphoserine. The segment covering 620 to 631 (ELRKTPVSEARK) has biased composition (basic and acidic residues). Disordered stretches follow at residues 620–646 (ELRKTPVSEARKTPVTQTPTQASNSQF), 696–794 (LQPT…YQQA), 890–911 (IDRRGKRSPGVFRPEQDPVPRM), 988–1055 (PSLP…AMGG), 1069–1089 (SSWHQASTPSGTWTGHGPSME), and 1104–1137 (SSSMMHPGPSALEQLLMQQKQKQQRGQGTMNPPH). Position 624 is a phosphothreonine (threonine 624). Polar residues-rich tracts occupy residues 633–646 (PVTQTPTQASNSQF) and 696–722 (LQPTAHSPAGNQVQAGKQSHIPYSQQR). Low complexity predominate over residues 723 to 770 (PSGPGPMNQGPQQSQPPSQQPLTSLPAQPTAQSTSQLQVQALTQQQQS). Phosphoserine is present on residues serine 781 and serine 897. The segment covering 988 to 998 (PSLPASSDHST) has biased composition (polar residues). Residues 999–1025 (PASQSPHSSNPSSLPSSPPTHNHNSVP) show a composition bias toward low complexity. The segment covering 1036 to 1050 (DNRDRRTADRWKTDK) has biased composition (basic and acidic residues). A compositionally biased stretch (polar residues) spans 1069 to 1081 (SSWHQASTPSGTW). Positions 1117-1131 (QLLMQQKQKQQRGQG) are enriched in low complexity.

As to quaternary structure, part of a complex that contains SMG5, SMG7, PPP2CA, a short isoform of UPF3A (isoform UPF3AS, but not isoform UPF3AL) and phosphorylated UPF1. Interacts with DHX34; the interaction is RNA-independent.

It is found in the cytoplasm. Its subcellular location is the nucleus. Its function is as follows. Plays a role in nonsense-mediated mRNA decay. Recruits UPF1 to cytoplasmic mRNA decay bodies. Together with SMG5 is thought to provide a link to the mRNA degradation machinery involving exonucleolytic pathways, and to serve as an adapter for UPF1 to protein phosphatase 2A (PP2A), thereby triggering UPF1 dephosphorylation. This Homo sapiens (Human) protein is Nonsense-mediated mRNA decay factor SMG7.